A 316-amino-acid chain; its full sequence is ATP synthase gamma chain (316 aa).

This sequence belongs to the ATPase gamma chain family. In terms of assembly, F-type ATPases have 2 components, CF(1) - the catalytic core - and CF(0) - the membrane proton channel. CF(1) has five subunits: alpha(3), beta(3), gamma(1), delta(1), epsilon(1). CF(0) has three main subunits: a, b and c.

It localises to the cellular thylakoid membrane. Its function is as follows. Produces ATP from ADP in the presence of a proton gradient across the membrane. The gamma chain is believed to be important in regulating ATPase activity and the flow of protons through the CF(0) complex. The polypeptide is ATP synthase gamma chain (Parasynechococcus marenigrum (strain WH8102)).